Reading from the N-terminus, the 456-residue chain is UDP-N-acetylmuramate--L-alanine ligase (456 aa).

ATP is bound at residue 112–118; that stretch reads GTHGKTT.

Belongs to the MurCDEF family.

The protein resides in the cytoplasm. The catalysed reaction is UDP-N-acetyl-alpha-D-muramate + L-alanine + ATP = UDP-N-acetyl-alpha-D-muramoyl-L-alanine + ADP + phosphate + H(+). It participates in cell wall biogenesis; peptidoglycan biosynthesis. Cell wall formation. The chain is UDP-N-acetylmuramate--L-alanine ligase from Trichlorobacter lovleyi (strain ATCC BAA-1151 / DSM 17278 / SZ) (Geobacter lovleyi).